Here is a 191-residue protein sequence, read N- to C-terminus: Calcium-activated potassium channel subunit beta-1 (191 aa).

Topologically, residues 1-18 (MVKKLVMAQKRGETRALC) are cytoplasmic. The helical transmembrane segment at 19–39 (LGVTMVVCAVITYYILVTTVL) threads the bilayer. The Extracellular segment spans residues 40 to 157 (PLYQKSVWTQ…FQRLYGPQAL (118 aa)). N-linked (GlcNAc...) asparagine glycans are attached at residues Asn-80 and Asn-142. Residues 158–178 (LFSLFWPTFLLTGGLLIIAMV) form a helical membrane-spanning segment. Residues 179–191 (KSNQYLSILAAQK) lie on the Cytoplasmic side of the membrane.

This sequence belongs to the KCNMB (TC 8.A.14.1) family. KCNMB1 subfamily. Interacts with KCNMA1 tetramer. There are probably 4 molecules of KCMNB1 per KCNMA1 tetramer. N-glycosylated. Abundantly expressed in smooth muscle. Low levels of expression in most other tissues. Within the brain, relatively high levels found in hippocampus and corpus callosum.

The protein localises to the membrane. Regulatory subunit of the calcium activated potassium KCNMA1 (maxiK) channel. Modulates the calcium sensitivity and gating kinetics of KCNMA1, thereby contributing to KCNMA1 channel diversity. Increases the apparent Ca(2+)/voltage sensitivity of the KCNMA1 channel. It also modifies KCNMA1 channel kinetics and alters its pharmacological properties. It slows down the activation and the deactivation kinetics of the channel. Acts as a negative regulator of smooth muscle contraction by enhancing the calcium sensitivity to KCNMA1. Its presence is also a requirement for internal binding of the KCNMA1 channel opener dehydrosoyasaponin I (DHS-1) triterpene glycoside and for external binding of the agonist hormone 17-beta-estradiol (E2). Increases the binding activity of charybdotoxin (CTX) toxin to KCNMA1 peptide blocker by increasing the CTX association rate and decreasing the dissociation rate. In Homo sapiens (Human), this protein is Calcium-activated potassium channel subunit beta-1 (KCNMB1).